A 228-amino-acid chain; its full sequence is UPF0056 membrane protein MJ0972 (228 aa).

The next 5 membrane-spanning stretches (helical) occupy residues 22–42 (FYIYGFVSLFITIDPIGLIPI), 68–88 (VVLLLFALFGNYIFGYFGITI), 133–153 (VPLAIPLISGPGAITTTMILI), 163–183 (GVVVLSILSAMLVSGIILSLT), and 201–221 (IMGLLLVAISVQIIFTGIVGL).

It belongs to the UPF0056 (MarC) family.

Its subcellular location is the cell membrane. The chain is UPF0056 membrane protein MJ0972 from Methanocaldococcus jannaschii (strain ATCC 43067 / DSM 2661 / JAL-1 / JCM 10045 / NBRC 100440) (Methanococcus jannaschii).